The chain runs to 287 residues: 2-dehydro-3-deoxyphosphooctonate aldolase (287 aa).

This sequence belongs to the KdsA family.

Its subcellular location is the cytoplasm. The catalysed reaction is D-arabinose 5-phosphate + phosphoenolpyruvate + H2O = 3-deoxy-alpha-D-manno-2-octulosonate-8-phosphate + phosphate. It functions in the pathway carbohydrate biosynthesis; 3-deoxy-D-manno-octulosonate biosynthesis; 3-deoxy-D-manno-octulosonate from D-ribulose 5-phosphate: step 2/3. It participates in bacterial outer membrane biogenesis; lipopolysaccharide biosynthesis. This is 2-dehydro-3-deoxyphosphooctonate aldolase from Rhodopseudomonas palustris (strain HaA2).